A 362-amino-acid polypeptide reads, in one-letter code: Probable dual-specificity RNA methyltransferase RlmN (362 aa).

E105 (proton acceptor) is an active-site residue. The 234-residue stretch at 111–344 (HNYGNSVCVT…VTIRREQGHD (234 aa)) folds into the Radical SAM core domain. An intrachain disulfide couples C118 to C349. Positions 125, 129, and 132 each coordinate [4Fe-4S] cluster. Residues 175 to 176 (GE), S207, 230 to 232 (SLH), and N306 contribute to the S-adenosyl-L-methionine site. The S-methylcysteine intermediate role is filled by C349.

Belongs to the radical SAM superfamily. RlmN family. [4Fe-4S] cluster is required as a cofactor.

The protein resides in the cytoplasm. The enzyme catalyses adenosine(2503) in 23S rRNA + 2 reduced [2Fe-2S]-[ferredoxin] + 2 S-adenosyl-L-methionine = 2-methyladenosine(2503) in 23S rRNA + 5'-deoxyadenosine + L-methionine + 2 oxidized [2Fe-2S]-[ferredoxin] + S-adenosyl-L-homocysteine. It catalyses the reaction adenosine(37) in tRNA + 2 reduced [2Fe-2S]-[ferredoxin] + 2 S-adenosyl-L-methionine = 2-methyladenosine(37) in tRNA + 5'-deoxyadenosine + L-methionine + 2 oxidized [2Fe-2S]-[ferredoxin] + S-adenosyl-L-homocysteine. Its function is as follows. Specifically methylates position 2 of adenine 2503 in 23S rRNA and position 2 of adenine 37 in tRNAs. The chain is Probable dual-specificity RNA methyltransferase RlmN from Halalkalibacterium halodurans (strain ATCC BAA-125 / DSM 18197 / FERM 7344 / JCM 9153 / C-125) (Bacillus halodurans).